We begin with the raw amino-acid sequence, 435 residues long: Trigger factor (435 aa).

The PPIase FKBP-type domain maps to 163-248; that stretch reads GDYVTFDFKG…IKEIKVKELP (86 aa).

Belongs to the FKBP-type PPIase family. Tig subfamily.

The protein localises to the cytoplasm. It carries out the reaction [protein]-peptidylproline (omega=180) = [protein]-peptidylproline (omega=0). Its function is as follows. Involved in protein export. Acts as a chaperone by maintaining the newly synthesized protein in an open conformation. Functions as a peptidyl-prolyl cis-trans isomerase. This Geotalea daltonii (strain DSM 22248 / JCM 15807 / FRC-32) (Geobacter daltonii) protein is Trigger factor.